The sequence spans 102 residues: Urease subunit beta (102 aa).

The protein belongs to the urease beta subunit family. Heterotrimer of UreA (gamma), UreB (beta) and UreC (alpha) subunits. Three heterotrimers associate to form the active enzyme.

It localises to the cytoplasm. It catalyses the reaction urea + 2 H2O + H(+) = hydrogencarbonate + 2 NH4(+). The protein operates within nitrogen metabolism; urea degradation; CO(2) and NH(3) from urea (urease route): step 1/1. The sequence is that of Urease subunit beta from Pseudomonas savastanoi pv. phaseolicola (strain 1448A / Race 6) (Pseudomonas syringae pv. phaseolicola (strain 1448A / Race 6)).